The primary structure comprises 328 residues: Probable G-protein coupled receptor 82 (328 aa).

Over 1 to 11 (MTNNSTCIQPS) the chain is Extracellular. N-linked (GlcNAc...) asparagine glycans are attached at residues asparagine 3 and asparagine 4. A helical transmembrane segment spans residues 12–32 (VISTTALPVTYIFLFIIGLFG). Over 33-55 (NSLAQWVFLTKIGKKTSTHIYLA) the chain is Cytoplasmic. Residues 56–76 (NLVTANLLVCTAMPFMGIYFL) form a helical membrane-spanning segment. The Extracellular segment spans residues 77-92 (RGFYWKYQSVQCRLVN). The chain crosses the membrane as a helical span at residues 93–115 (FLGTLSMHVSMFVSLLILSWIAI). Topologically, residues 116–156 (SRYATLMKKESKQEATSCYERMFYGHVLKRFRQPNFARTMC) are cytoplasmic. A helical membrane pass occupies residues 157-177 (IYIWGVVLVIIIPVTLYYSVV). The Extracellular portion of the chain corresponds to 178 to 197 (EATEEGQSQCYNRQMELGAR). The chain crosses the membrane as a helical span at residues 198–218 (PSQIAGLIGTTFIGFSFLVVV). Over 219-251 (TSYYSLVSHLRRVRTCTSITEKDLTYRSVKRHL) the chain is Cytoplasmic. The helical transmembrane segment at 252-272 (LIIQVLLVVCFLPYSIFKPIF) threads the bilayer. Over 273–328 (YVLHQREGDCQQLNYLIEAKNILTCLASARSSTDPIIFLLLDKTFKKTLYGLLTKS) the chain is Extracellular.

Belongs to the G-protein coupled receptor 1 family.

It localises to the cell membrane. Its function is as follows. Orphan receptor. This Mus musculus (Mouse) protein is Probable G-protein coupled receptor 82 (Gpr82).